The sequence spans 51 residues: Methionine aminopeptidase (51 aa).

Belongs to the peptidase M24A family. Methionine aminopeptidase type 1 subfamily. As to quaternary structure, monomer. It depends on Co(2+) as a cofactor. Zn(2+) is required as a cofactor. Requires Mn(2+) as cofactor. Fe(2+) serves as cofactor.

The catalysed reaction is Release of N-terminal amino acids, preferentially methionine, from peptides and arylamides.. In terms of biological role, removes the N-terminal methionine from nascent proteins. The N-terminal methionine is often cleaved when the second residue in the primary sequence is small and uncharged (Met-Ala-, Cys, Gly, Pro, Ser, Thr, or Val). Requires deformylation of the N(alpha)-formylated initiator methionine before it can be hydrolyzed. The protein is Methionine aminopeptidase (map) of Geobacillus stearothermophilus (Bacillus stearothermophilus).